A 210-amino-acid polypeptide reads, in one-letter code: Proteasome subunit beta (210 aa).

Positions 1-9 (MDNDKHLKG) are cleaved as a propeptide — removed in mature form; by autocatalysis. Residue Thr-10 is the Nucleophile of the active site.

It belongs to the peptidase T1B family. The 20S proteasome core is composed of 14 alpha and 14 beta subunits that assemble into four stacked heptameric rings, resulting in a barrel-shaped structure. The two inner rings, each composed of seven catalytic beta subunits, are sandwiched by two outer rings, each composed of seven alpha subunits. The catalytic chamber with the active sites is on the inside of the barrel. Has a gated structure, the ends of the cylinder being occluded by the N-termini of the alpha-subunits. Is capped at one or both ends by the proteasome regulatory ATPase, PAN.

The protein resides in the cytoplasm. The enzyme catalyses Cleavage of peptide bonds with very broad specificity.. Its activity is regulated as follows. The formation of the proteasomal ATPase PAN-20S proteasome complex, via the docking of the C-termini of PAN into the intersubunit pockets in the alpha-rings, triggers opening of the gate for substrate entry. Interconversion between the open-gate and close-gate conformations leads to a dynamic regulation of the 20S proteasome proteolysis activity. Component of the proteasome core, a large protease complex with broad specificity involved in protein degradation. This is Proteasome subunit beta from Methanohalophilus mahii (strain ATCC 35705 / DSM 5219 / SLP).